The following is a 597-amino-acid chain: Protein kinase C-like 3 (597 aa).

One can recognise a PB1 domain in the interval 12–95 (DIKLKTRFHG…AELNIHVFVG (84 aa)). A Phorbol-ester/DAG-type zinc finger spans residues 127-177 (GHRFQGKRLNRRIQCFICHDYIWGIGRQGFRCVDCRLCVHKKCHRHVRTHC). Positions 181 to 238 (PQGPNVPVAPSSGVGSLRGGRLDTSSSTTRSGGGIDNGAFHEHEIESPGSAKDMSRST) are disordered. Residues 253-522 (FRLLTVIGRG…LNDMKEHDFF (270 aa)) enclose the Protein kinase domain. ATP-binding positions include 259–267 (IGRGSYAKV) and Lys-282. Asp-377 (proton acceptor) is an active-site residue. The 72-residue stretch at 524 to 595 (GFIDWEALEQ…VNPLQMSRED (72 aa)) folds into the AGC-kinase C-terminal domain.

It belongs to the protein kinase superfamily. AGC Ser/Thr protein kinase family. PKC subfamily. As to quaternary structure, interaction with par-3 required for the peripheral localization of par-6 and to form a par-3/par-6/pkc-3 complex, which is activated when cdc-42 interacts with par-6. Binds avidly to the phosphotyrosine interaction domain (PID) of a novel pkc-3 adapter protein num-1, which enables tethering and targeting of pkc-3 to the cell periphery. Mg(2+) is required as a cofactor.

Its subcellular location is the cytoplasm. It is found in the cytoskeleton. The enzyme catalyses L-seryl-[protein] + ATP = O-phospho-L-seryl-[protein] + ADP + H(+). It carries out the reaction L-threonyl-[protein] + ATP = O-phospho-L-threonyl-[protein] + ADP + H(+). In terms of biological role, required for the normal progression of embryogenesis and viability of the organism. Plays an indispensable role in establishing embryonic polarity and in recruiting and maintaining par-6 to the periphery, through interaction with par-3. Required for epithelial cell polarity in the distal spermatheca. Phosphorylates serine residues of num-1. Required for the expression of antimicrobial peptide nlp-29 in response in response to fungal infection or physical injury. In Caenorhabditis briggsae, this protein is Protein kinase C-like 3.